The primary structure comprises 171 residues: MQRLLTYRALNFILFIASVVAMLFAIIFLQNYKGLEPCPLCIFQRIGLMVMGGFSLIAAVGHPKKMGMQLLLWIGSMAGILWSAGVAARHVWIQHLPADQVPACGPGLDYFLEALPMKQVINQVLSGSGECAEISWRFLGLSIPEQALILFTALILVNLLVLWRIISKRTA.

The Cytoplasmic portion of the chain corresponds to 1-10 (MQRLLTYRAL). A helical transmembrane segment spans residues 11–27 (NFILFIASVVAMLFAII). Residues 28–46 (FLQNYKGLEPCPLCIFQRI) are Periplasmic-facing. Cysteine 38 and cysteine 41 are disulfide-bonded. The helical transmembrane segment at 47-63 (GLMVMGGFSLIAAVGHP) threads the bilayer. The Cytoplasmic portion of the chain corresponds to 64-70 (KKMGMQL). A helical membrane pass occupies residues 71–88 (LLWIGSMAGILWSAGVAA). The Periplasmic portion of the chain corresponds to 89-145 (RHVWIQHLPADQVPACGPGLDYFLEALPMKQVINQVLSGSGECAEISWRFLGLSIPE). Residues cysteine 104 and cysteine 131 are joined by a disulfide bond. Residues 146-164 (QALILFTALILVNLLVLWR) traverse the membrane as a helical segment. The Cytoplasmic segment spans residues 165 to 171 (IISKRTA).

This sequence belongs to the DsbB family.

Its subcellular location is the cell inner membrane. Its function is as follows. Required for disulfide bond formation in some periplasmic proteins. Acts by oxidizing the DsbA protein. In Psychrobacter sp. (strain PRwf-1), this protein is Disulfide bond formation protein B.